The sequence spans 430 residues: Serine/threonine-protein kinase Sgk1 (430 aa).

Positions 1 to 60 are necessary for localization to the mitochondria; that stretch reads MTVKTEAARSTLTYSRMRGMVAILIAFMKQRRMGLNDFIQKLANNSYACKHPEVQSYLKI. The interval 66–92 is disordered; the sequence is PELMNANPSPPPSPSQQINLGPSSNPH. Serine 74 carries the phosphoserine modification. The residue at position 78 (serine 78) is a Phosphoserine; by MAPK7. A compositionally biased stretch (polar residues) spans 81 to 91; the sequence is QQINLGPSSNP. The region spanning 98 to 354 is the Protein kinase domain; sequence FHFLKVIGKG…FMEIKSHIFF (257 aa). Residues 104 to 112 and lysine 127 contribute to the ATP site; that span reads IGKGSFGKV. Residues 131 to 141 carry the Nuclear localization signal motif; that stretch reads KKAILKKKEEK. Aspartate 222 functions as the Proton acceptor in the catalytic mechanism. Threonine 256 bears the Phosphothreonine; by PDPK1 mark. The region spanning 355-430 is the AGC-kinase C-terminal domain; that stretch reads SLINWDDLIN…SYAPPMDSFL (76 aa). Threonine 368 is modified (phosphothreonine; by PKA). Residues serine 396, serine 400, and serine 421 each carry the phosphoserine modification.

This sequence belongs to the protein kinase superfamily. AGC Ser/Thr protein kinase family. Homodimer; disulfide-linked. Forms a trimeric complex with FBXW7 and NOTCH1. Interacts with MAPK3/ERK1, MAPK1/ERK2, MAP2K1/MEK1, MAP2K2/MEK2, NEDD4, NEDD4L, MAPK7, CREB1, SLC9A3R2/NHERF2 and KCNJ1/ROMK1. Associates with the mammalian target of rapamycin complex 2 (mTORC2) via an interaction with MAPKAP1/SIN1. Interacts with MAPT/TAU. In terms of processing, regulated by phosphorylation. Activated by phosphorylation on Ser-421 by mTORC2, transforming it into a substrate for PDPK1 which phosphorylates it on Thr-256. Phosphorylation on Ser-396 and Ser-400 are also essential for its activity. Phosphorylation on Ser-78 by MAPK7 is required for growth factor-induced cell cycle progression. Post-translationally, ubiquitinated by NEDD4L; which promotes proteasomal degradation. Ubiquitinated by SYVN1 at the endoplasmic reticulum; which promotes rapid proteasomal degradation and maintains a high turnover rate in resting cells. Expressed in most tissues with highest levels in the ovary, thymus and lung. In the kidney, expressed within glomeruli of the cortex, at low levels in outer medulla and moderate levels in inner medulla and papilla.

The protein resides in the cytoplasm. The protein localises to the nucleus. Its subcellular location is the endoplasmic reticulum membrane. It is found in the cell membrane. It localises to the mitochondrion. It carries out the reaction L-seryl-[protein] + ATP = O-phospho-L-seryl-[protein] + ADP + H(+). The catalysed reaction is L-threonyl-[protein] + ATP = O-phospho-L-threonyl-[protein] + ADP + H(+). Two specific sites, one in the kinase domain (Thr-256) and the other in the C-terminal regulatory region (Ser-421), need to be phosphorylated for its full activation. Phosphorylation at Ser-396 and Ser-400 are also essential for its activity. Activated by WNK1, WNK2, WNK3 and WNK4. Serine/threonine-protein kinase which is involved in the regulation of a wide variety of ion channels, membrane transporters, cellular enzymes, transcription factors, neuronal excitability, cell growth, proliferation, survival, migration and apoptosis. Plays an important role in cellular stress response. Contributes to regulation of renal Na(+) retention, renal K(+) elimination, salt appetite, gastric acid secretion, intestinal Na(+)/H(+) exchange and nutrient transport, insulin-dependent salt sensitivity of blood pressure, salt sensitivity of peripheral glucose uptake, cardiac repolarization and memory consolidation. Up-regulates Na(+) channels: SCNN1A/ENAC, SCN5A and ASIC1/ACCN2, K(+) channels: KCNJ1/ROMK1, KCNA1-5, KCNQ1-5 and KCNE1, epithelial Ca(2+) channels: TRPV5 and TRPV6, chloride channels: BSND, CLCN2 and CFTR, glutamate transporters: SLC1A3/EAAT1, SLC1A2 /EAAT2, SLC1A1/EAAT3, SLC1A6/EAAT4 and SLC1A7/EAAT5, amino acid transporters: SLC1A5/ASCT2, SLC38A1/SN1 and SLC6A19, creatine transporter: SLC6A8, Na(+)/dicarboxylate cotransporter: SLC13A2/NADC1, Na(+)-dependent phosphate cotransporter: SLC34A2/NAPI-2B, glutamate receptor: GRIK2/GLUR6. Up-regulates carriers: SLC9A3/NHE3, SLC12A1/NKCC2, SLC12A3/NCC, SLC5A3/SMIT, SLC2A1/GLUT1, SLC5A1/SGLT1 and SLC15A2/PEPT2. Regulates enzymes: GSK3A/B, PMM2 and Na(+)/K(+) ATPase, and transcription factors: CTNNB1 and nuclear factor NF-kappa-B. Stimulates sodium transport into epithelial cells by enhancing the stability and expression of SCNN1A/ENAC. This is achieved by phosphorylating the NEDD4L ubiquitin E3 ligase, promoting its interaction with 14-3-3 proteins, thereby preventing it from binding to SCNN1A/ENAC and targeting it for degradation. Regulates store-operated Ca(+2) entry (SOCE) by stimulating ORAI1 and STIM1. Regulates KCNJ1/ROMK1 directly via its phosphorylation or indirectly via increased interaction with SLC9A3R2/NHERF2. Phosphorylates MDM2 and activates MDM2-dependent ubiquitination of p53/TP53. Phosphorylates SLC2A4/GLUT4 and up-regulates its activity. Phosphorylates APBB1/FE65 and promotes its localization to the nucleus. Phosphorylates FBXW7 and plays an inhibitory role in the NOTCH1 signaling. Phosphorylates FOXO1 resulting in its relocalization from the nucleus to the cytoplasm. Phosphorylates FOXO3, promoting its exit from the nucleus and interference with FOXO3-dependent transcription. Phosphorylates BRAF and MAP3K3/MEKK3 and inhibits their activity. Phosphorylates SLC9A3/NHE3 in response to dexamethasone, resulting in its activation and increased localization at the cell membrane. Phosphorylates CREB1. Necessary for vascular remodeling during angiogenesis. Phosphorylates MAPT/TAU and mediates microtubule depolymerization and neurite formation in hippocampal neurons. Phosphorylates MAPK1/ERK2 and activates it by enhancing its interaction with MAP2K1/MEK1 and MAP2K2/MEK2. May also play an important role in the development of particular groups of neurons in the postnatal brain. This Rattus norvegicus (Rat) protein is Serine/threonine-protein kinase Sgk1 (Sgk1).